The primary structure comprises 173 residues: NEDD4-binding protein 2-like 1 (173 aa).

Residues 1–35 (MEESFLESFGRLSLRQQQPPPPRPPAPPPLRGTPP) form a disordered region. Over residues 18 to 32 (QPPPPRPPAPPPLRG) the composition is skewed to pro residues.

In terms of assembly, interacts with dynactin subunit proteins, including DCTN4, DCTN5 and DCTN5.

Its function is as follows. Might play a role in adipocyte differentiation and triglyceride accumulation. The protein is NEDD4-binding protein 2-like 1 (N4BP2L1) of Bos taurus (Bovine).